We begin with the raw amino-acid sequence, 723 residues long: DNA-binding protein RFX2 (723 aa).

The disordered stretch occupies residues 1-46 (MQNSEGGADSPASVALRPSAAAPPVPASPQRVLVQAASSAPKGAQM). A compositionally biased stretch (low complexity) spans 10–20 (SPASVALRPSA). Residue Ser-28 is modified to Phosphoserine. The segment at residues 199-274 (HLQWLLDNYE…YHYYGIRLKP (76 aa)) is a DNA-binding region (RFX-type winged-helix). The segment at 292–332 (QQPMHQKPRYRPAQKTDSLGDSGSHSSLHSTPEQTMAAQSQ) is disordered. The segment covering 307 to 322 (TDSLGDSGSHSSLHST) has biased composition (low complexity). A compositionally biased stretch (polar residues) spans 323–332 (PEQTMAAQSQ). Ser-416 carries the phosphoserine modification. The segment at 689–723 (GDERRGSEAGPDAHSLGEPLVKRERSDPNHSLQGI) is disordered.

This sequence belongs to the RFX family. As to quaternary structure, homodimer; probably only forms homodimers in testis. Heterodimer; heterodimerizes with RFX1 and RFX3.

It localises to the nucleus. The protein localises to the cytoplasm. Functionally, transcription factor that acts as a key regulator of spermatogenesis. Acts by regulating expression of genes required for the haploid phase during spermiogenesis, such as genes required for cilium assembly and function. Recognizes and binds the X-box, a regulatory motif with DNA sequence 5'-GTNRCC(0-3N)RGYAAC-3' present on promoters. Probably activates transcription of the testis-specific histone gene H1-6. The sequence is that of DNA-binding protein RFX2 (RFX2) from Macaca fascicularis (Crab-eating macaque).